The chain runs to 115 residues: MQPPYIQERLKSLNDIETQLCSMLQEASQVTFIFGELKRGNESVKPQFENHVKQFYERLDKSTTQLRKEIQLLDENVGTRLLPINVNKKALGQDTEKMEEQLDLLSAILDPSKSK.

Residues 56–107 (YERLDKSTTQLRKEIQLLDENVGTRLLPINVNKKALGQDTEKMEEQLDLLSA) are a coiled coil.

The protein belongs to the mediator complex subunit 11 family. In terms of assembly, component of the Mediator complex, which is composed of at least 21 subunits that form three structurally distinct submodules. The Mediator head module contains MED6, MED8, MED11, SRB4/MED17, SRB5/MED18, ROX3/MED19, SRB2/MED20 and SRB6/MED22, the middle module contains MED1, MED4, NUT1/MED5, MED7, CSE2/MED9, NUT2/MED10, SRB7/MED21 and SOH1/MED31, and the tail module contains MED2, PGD1/MED3, RGR1/MED14, GAL11/MED15 and SIN4/MED16. The head and the middle modules interact directly with RNA polymerase II, whereas the elongated tail module interacts with gene-specific regulatory proteins. MED11 forms a heterodimer with SRB6/MED22. The MED11/22 heterodimer binds to and stabilizes the central head subunit SRB4/MED17. Interacts with TFIIH subunit RAD3.

It localises to the nucleus. Its function is as follows. Component of the Mediator complex, a coactivator involved in the regulated transcription of nearly all RNA polymerase II-dependent genes. Mediator functions as a bridge to convey information from gene-specific regulatory proteins to the basal RNA polymerase II transcription machinery. The Mediator complex, having a compact conformation in its free form, is recruited to promoters by direct interactions with regulatory proteins and serves for the assembly of a functional pre-initiation complex (PIC) with RNA polymerase II and the general transcription factors. The Mediator complex unfolds to an extended conformation and partially surrounds RNA polymerase II, specifically interacting with the unphosphorylated form of the C-terminal domain (CTD) of RNA polymerase II. The Mediator complex dissociates from the RNA polymerase II holoenzyme and stays at the promoter when transcriptional elongation begins. The essential MED11/22 heterodimer specifically functions in promoting stable PIC formation. In Saccharomyces cerevisiae (strain ATCC 204508 / S288c) (Baker's yeast), this protein is Mediator of RNA polymerase II transcription subunit 11 (MED11).